The sequence spans 122 residues: Glycine cleavage system H protein (122 aa).

The Lipoyl-binding domain maps to 19–101 (MVTVGVTHYA…ETEGWLWKMT (83 aa)). N6-lipoyllysine is present on lysine 60.

It belongs to the GcvH family. The glycine cleavage system is composed of four proteins: P, T, L and H. (R)-lipoate is required as a cofactor.

Its function is as follows. The glycine cleavage system catalyzes the degradation of glycine. The H protein shuttles the methylamine group of glycine from the P protein to the T protein. This is Glycine cleavage system H protein from Bartonella tribocorum (strain CIP 105476 / IBS 506).